A 1480-amino-acid polypeptide reads, in one-letter code: Cystic fibrosis transmembrane conductance regulator (1480 aa).

The Cytoplasmic portion of the chain corresponds to 1–77 (MQRSPLEKAS…KLINALRRCF (77 aa)). A helical transmembrane segment spans residues 78–98 (FWRFMFYGIFLYLGEVTKAVQ). In terms of domain architecture, ABC transmembrane type-1 1 spans 81 to 365 (FMFYGIFLYL…WAVQTWYDSL (285 aa)). Topologically, residues 99–122 (PLLLGRIIASYDPDNKEERSIAIY) are extracellular. Residues 123–146 (LGIGLCLLFIVRTLLLHPAIFGLH) traverse the membrane as a helical segment. Topologically, residues 147-195 (HIGMQMRIAMFSLIYKKTLKLSSRVLDKISIGQLVSLLSNNLNKFDEGL) are cytoplasmic. Residues 196–216 (ALAHFVWIAPLQVALLMGLIW) traverse the membrane as a helical segment. The Extracellular portion of the chain corresponds to 217–222 (ELLQAS). The chain crosses the membrane as a helical span at residues 223–243 (AFCGLGFLIVLALFQAGLGRM). Residues 244-298 (MMKYRDQRAGKISERLVITSEMIENIQSVKAYCWEEAMEKMIENLRQTELKLTRK) are Cytoplasmic-facing. The helical transmembrane segment at 299–319 (AAYVRYFNSSAFFFSGFFVVF) threads the bilayer. Residues 320–339 (LSVLPYALIKGIILRKIFTT) are Extracellular-facing. The helical transmembrane segment at 340-358 (ISFCIVLRMAVTRQFPWAV) threads the bilayer. At 359 to 858 (QTWYDSLGAI…YLRYITVHKS (500 aa)) the chain is on the cytoplasmic side. ATP contacts are provided by residues Trp-401, Ser-434, 458 to 465 (GSTGAGKT), and Gln-493. Residues 423–646 (NGDDSLFFSN…RPDFSSKLMG (224 aa)) form the ABC transporter 1 domain. The S-palmitoyl cysteine moiety is linked to residue Cys-524. Residues Ser-549 and Ser-660 each carry the phosphoserine modification. The disordered R region stretch occupies residues 654 to 831 (SAERRNSILT…EEINEEDLKE (178 aa)). Ser-670 carries the post-translational modification Phosphoserine; by PKA. A Phosphoserine modification is found at Ser-686. Lys-688 is covalently cross-linked (Glycyl lysine isopeptide (Lys-Gly) (interchain with G-Cter in ubiquitin)). 2 positions are modified to phosphoserine: Ser-700 and Ser-712. At Thr-717 the chain carries Phosphothreonine. Phosphoserine occurs at positions 737, 753, 768, 790, 795, and 813. A helical transmembrane segment spans residues 859 to 879 (LIFVLIWCLVIFLAEVAASLV). Residues 859–1155 (LIFVLIWCLV…AVNSSIDVDS (297 aa)) enclose the ABC transmembrane type-1 2 domain. The Extracellular segment spans residues 880–918 (VLWLLGNTPLQDKGNSTHSRNNSYAVIITSTSSYYVFYI). Asn-894 and Asn-900 each carry an N-linked (GlcNAc...) asparagine glycan. The discontinuously helical transmembrane segment at 919–939 (YVGVADTLLAMGFFRGLPLVH) threads the bilayer. Residues 940–990 (TLITVSKILHHKMLHSVLQAPMSTLNTLKAGGILNRFSKDIAILDDLLPLT) are Cytoplasmic-facing. A helical membrane pass occupies residues 991–1011 (IFDFIQLLLIVIGAIAVVAVL). Residues 1012–1013 (QP) are Extracellular-facing. Residues 1014 to 1034 (YIFVATVPVIVAFIMLRAYFL) form a helical membrane-spanning segment. At 1035–1095 (QTSQQLKQLE…TANWFLYLST (61 aa)) the chain is on the cytoplasmic side. A helical transmembrane segment spans residues 1096–1116 (LRWFQMRIEMIFVIFFIAVTF). Over 1117–1130 (ISILTTGEGEGRVG) the chain is Extracellular. A helical membrane pass occupies residues 1131-1151 (IILTLAMNIMSTLQWAVNSSI). The Cytoplasmic portion of the chain corresponds to 1152-1480 (DVDSLMRSVS…TEEEVQDTRL (329 aa)). Residues 1210–1443 (MTVKDLTAKY…RSLFRQAISP (234 aa)) form the ABC transporter 2 domain. Residues Tyr-1219 and 1244 to 1251 (GRTGSGKS) contribute to the ATP site. The interaction with GORASP2 stretch occupies residues 1386–1480 (RTLKQAFADC…TEEEVQDTRL (95 aa)). A lipid anchor (S-palmitoyl cysteine) is attached at Cys-1395. Phosphoserine is present on residues Ser-1444 and Ser-1456. Residues 1452–1480 (HRNSSKCKSKPQIAALKEETEEEVQDTRL) are disordered. Over residues 1470 to 1480 (ETEEEVQDTRL) the composition is skewed to acidic residues. The short motif at 1478–1480 (TRL) is the PDZ-binding element.

Belongs to the ABC transporter superfamily. ABCC family. CFTR transporter (TC 3.A.1.202) subfamily. In terms of assembly, monomer; does not require oligomerization for channel activity. May form oligomers in the membrane. Interacts with SLC26A3, SLC26A6 and NHERF1. Interacts with SHANK2. Interacts with MYO6. Interacts (via C-terminus) with GOPC (via PDZ domain); this promotes CFTR internalization and thereby decreases channel activity. Interacts with SLC4A7 through NHERF1. Found in a complex with MYO5B and RAB11A. Interacts with ANO1. Interacts with SLC26A8. Interacts with AHCYL1; the interaction increases CFTR activity. Interacts with CSE1L. The core-glycosylated form interacts with GORASP2 (via PDZ GRASP-type 1 domain) in respone to ER stress. Interacts with MARCHF2; the interaction leads to CFTR ubiqtuitination and degradation. Interacts with ADGRG2. Post-translationally, N-glycosylated. Phosphorylated; cAMP treatment promotes phosphorylation and activates the channel. Dephosphorylation decreases the ATPase activity (in vitro). Phosphorylation at PKA sites activates the channel. Phosphorylation at PKC sites enhances the response to phosphorylation by PKA. Phosphorylated by AMPK; this inhibits channel activity. In terms of processing, ubiquitinated, leading to its degradation in the lysosome. Deubiquitination by USP10 in early endosomes enhances its endocytic recycling to the cell membrane. Ubiquitinated by RNF185 during ER stress. Ubiquitinated by MARCHF2.

The protein localises to the apical cell membrane. It localises to the early endosome membrane. Its subcellular location is the cell membrane. It is found in the recycling endosome membrane. The protein resides in the endoplasmic reticulum membrane. The protein localises to the nucleus. It carries out the reaction ATP + H2O + closed Cl(-) channel = ADP + phosphate + open Cl(-) channel.. It catalyses the reaction chloride(in) = chloride(out). The catalysed reaction is hydrogencarbonate(in) = hydrogencarbonate(out). The enzyme catalyses ATP + H2O = ADP + phosphate + H(+). Functionally, epithelial ion channel that plays an important role in the regulation of epithelial ion and water transport and fluid homeostasis. Mediates the transport of chloride ions across the cell membrane. Possesses an intrinsic ATPase activity and utilizes ATP to gate its channel; the passive flow of anions through the channel is gated by cycles of ATP binding and hydrolysis by the ATP-binding domains. The ion channel is also permeable to HCO(3)(-); selectivity depends on the extracellular chloride concentration. Exerts its function also by modulating the activity of other ion channels and transporters. Contributes to the regulation of the pH and the ion content of the epithelial fluid layer. Modulates the activity of the epithelial sodium channel (ENaC) complex, in part by regulating the cell surface expression of the ENaC complex. May regulate bicarbonate secretion and salvage in epithelial cells by regulating the transporter SLC4A7. Can inhibit the chloride channel activity of ANO1. Plays a role in the chloride and bicarbonate homeostasis during sperm epididymal maturation and capacitation. In Pan troglodytes (Chimpanzee), this protein is Cystic fibrosis transmembrane conductance regulator.